We begin with the raw amino-acid sequence, 214 residues long: Ribonuclease HII (214 aa).

The RNase H type-2 domain maps to 26–214; that stretch reads EIVCGVDEAG…PVREAFDLIR (189 aa). Residues D32, E33, and D124 each contribute to the a divalent metal cation site.

Belongs to the RNase HII family. Mn(2+) serves as cofactor. It depends on Mg(2+) as a cofactor.

It localises to the cytoplasm. It catalyses the reaction Endonucleolytic cleavage to 5'-phosphomonoester.. In terms of biological role, endonuclease that specifically degrades the RNA of RNA-DNA hybrids. The sequence is that of Ribonuclease HII from Burkholderia pseudomallei (strain 668).